The chain runs to 269 residues: Glutamate racemase (269 aa).

Residues 13–14 (DS) and 45–46 (YS) contribute to the substrate site. C77 functions as the Proton donor/acceptor in the catalytic mechanism. 78-79 (NT) provides a ligand contact to substrate. C188 serves as the catalytic Proton donor/acceptor. Residue 189–190 (TH) coordinates substrate.

Belongs to the aspartate/glutamate racemases family.

It carries out the reaction L-glutamate = D-glutamate. It functions in the pathway cell wall biogenesis; peptidoglycan biosynthesis. Functionally, provides the (R)-glutamate required for cell wall biosynthesis. This is Glutamate racemase from Pasteurella multocida (strain Pm70).